Here is a 353-residue protein sequence, read N- to C-terminus: uncharacterized protein (353 aa).

The signal sequence occupies residues 1-24 (MRVVERAVIACYLGITIFSGIAFG).

This sequence belongs to the chlamydial CPn_1058/CT_355/TC_0634 family.

This is an uncharacterized protein from Chlamydia trachomatis serovar D (strain ATCC VR-885 / DSM 19411 / UW-3/Cx).